A 159-amino-acid chain; its full sequence is Probable cyclic pyranopterin monophosphate synthase accessory protein (159 aa).

The active site involves D128.

It belongs to the MoaC family.

It functions in the pathway cofactor biosynthesis; molybdopterin biosynthesis. In terms of biological role, together with MoaA, is involved in the conversion of 5'-GTP to cyclic pyranopterin monophosphate (cPMP or molybdopterin precursor Z). This chain is Probable cyclic pyranopterin monophosphate synthase accessory protein, found in Methanothermobacter thermautotrophicus (strain ATCC 29096 / DSM 1053 / JCM 10044 / NBRC 100330 / Delta H) (Methanobacterium thermoautotrophicum).